Consider the following 89-residue polypeptide: U1-hexatoxin-Iw1e (89 aa).

Residues 1 to 18 (MLKFVVLIFVVIMASTFA) form the signal peptide. 5 disulfides stabilise this stretch: C21–C32, C26–C40, C31–C66, C50–C74, and C68–C81. Residues 87 to 89 (RSE) constitute a propeptide that is removed on maturation.

It belongs to the MIT-like AcTx family. Expressed by the venom gland.

It is found in the secreted. The protein is U1-hexatoxin-Iw1e of Illawarra wisharti (Illawarra funnel-web spider).